Consider the following 633-residue polypeptide: DNA repair protein XRCC1 (633 aa).

The residue at position 144 (serine 144) is a Phosphoserine. A disordered region spans residues 151–172; it reads VRFHSPPDKDEAETPSQKGTVT. Lysine 180 is covalently cross-linked (Glycyl lysine isopeptide (Lys-Gly) (interchain with G-Cter in SUMO1); alternate). A Glycyl lysine isopeptide (Lys-Gly) (interchain with G-Cter in SUMO2); alternate cross-link involves residue lysine 180. Residue threonine 202 is modified to Phosphothreonine. Residues serine 203, serine 230, serine 245, and serine 263 each carry the phosphoserine modification. The segment at 234-316 is disordered; that stretch reads KALGSSCKPQ…PRGARAGPQE (83 aa). Basic and acidic residues predominate over residues 244-261; that stretch reads ESPKGKRKLDLNLEDRRP. Residues 280-298 are compositionally biased toward low complexity; sequence PSRSPAAAAASTPAQKAAP. A compositionally biased stretch (basic and acidic residues) spans 300-309; that stretch reads KPREGTEPRG. Positions 316-404 constitute a BRCT 1 domain; the sequence is ELGKILQGVV…RRLPSRRYLM (89 aa). Phosphoserine occurs at positions 372, 409, 410, 411, 447, and 448. The tract at residues 407 to 538 is disordered; it reads LGSSSEDEED…STEADLPIPE (132 aa). Acidic residues predominate over residues 411-425; the sequence is SEDEEDDSPGESGED. Phosphothreonine occurs at positions 454 and 458. 2 positions are modified to phosphoserine: serine 462 and serine 486. Residues 467-491 are compositionally biased toward acidic residues; that stretch reads DNSDTEGEQSEGQDNGAEDSGDTED. The residue at position 489 (threonine 489) is a Phosphothreonine. The segment covering 492-503 has biased composition (basic and acidic residues); that stretch reads ELRRVAEQREQR. Phosphoserine is present on serine 519. Phosphothreonine is present on residues threonine 520 and threonine 524. The BRCT 2 domain maps to 538–629; the sequence is ELPDFFQGKH…KLLPHQLYGV (92 aa).

In terms of assembly, homodimer. Interacts with polynucleotide kinase (PNK), DNA polymerase-beta (POLB) and DNA ligase III (LIG3). Interacts with APTX and APLF. Interacts with APEX1; the interaction is induced by SIRT1 and increases with the acetylated form of APEX1. Interacts with (poly-ADP-ribosylated) PARP1. In terms of processing, phosphorylation of Ser-372 causes dimer dissociation. Phosphorylation by CK2 promotes interaction with APTX and APLF. Sumoylated.

The protein localises to the nucleus. The protein resides in the chromosome. In terms of biological role, scaffold protein involved in DNA single-strand break repair by mediating the assembly of DNA break repair protein complexes. Negatively regulates ADP-ribosyltransferase activity of PARP1 during base-excision repair in order to prevent excessive PARP1 activity. Recognizes and binds poly-ADP-ribose chains: specifically binds auto-poly-ADP-ribosylated PARP1, limiting its activity. In Cricetulus griseus (Chinese hamster), this protein is DNA repair protein XRCC1 (XRCC1).